Reading from the N-terminus, the 292-residue chain is Phosphatidylglycerol--prolipoprotein diacylglyceryl transferase (292 aa).

6 helical membrane-spanning segments follow: residues 25–45 (IALHWYGLGYVVGILFAWWYA), 70–90 (FVVWSAISVVVGGRLGQVLVW), 101–121 (AIIAVWDGGMSFHGGFIGIII), 138–158 (FDIVAAGAPIGIGIVRICNFI), 193–213 (FMEGFLLFIILFIIIFAFKAL), and 255–275 (GFTYGMALSLPMLFFGIYLLL). R153 provides a ligand contact to a 1,2-diacyl-sn-glycero-3-phospho-(1'-sn-glycerol).

Belongs to the Lgt family.

It localises to the cell inner membrane. The catalysed reaction is L-cysteinyl-[prolipoprotein] + a 1,2-diacyl-sn-glycero-3-phospho-(1'-sn-glycerol) = an S-1,2-diacyl-sn-glyceryl-L-cysteinyl-[prolipoprotein] + sn-glycerol 1-phosphate + H(+). It participates in protein modification; lipoprotein biosynthesis (diacylglyceryl transfer). Its function is as follows. Catalyzes the transfer of the diacylglyceryl group from phosphatidylglycerol to the sulfhydryl group of the N-terminal cysteine of a prolipoprotein, the first step in the formation of mature lipoproteins. The sequence is that of Phosphatidylglycerol--prolipoprotein diacylglyceryl transferase from Bartonella quintana (strain Toulouse) (Rochalimaea quintana).